Consider the following 338-residue polypeptide: MSWELLLWLLALCALILPLVQLLRFLRADADLTLLWAEWQGRRPEWELTDMVVWVTGASSGIGEELAFQLSKLGVSLVLSARRAQELERVKRRCLENGNLKEKDILVLPLDLTDTSSHEAATKAVLQEFGKIDILVNNGGRSQRSLVLETNLDVFKELINLNYIGTVSLTKCVLPHMIERKQGKIVTVNSIAGIASVSLSSGYCASKHALRGFFNALHSELGQYPGITFCNVYPGPVQSDIVKNAFTEEVTKSMRNNIDQSYKMPTSRCVRLMLISMANDLKEVWISDHPVLLGAYIWQYMPTWAAWLNCKLGKERIQNFKNNLDPDLPYKFLKAKKD.

The signal sequence occupies residues 1–28 (MSWELLLWLLALCALILPLVQLLRFLRA). Ser60 and Ile62 together coordinate NAD(+). Ser190 is a binding site for substrate. The NAD(+) site is built by Tyr203, Lys207, and Ser239. Tyr203 (proton acceptor) is an active-site residue.

Belongs to the short-chain dehydrogenases/reductases (SDR) family.

Its subcellular location is the endoplasmic reticulum membrane. It catalyses the reaction all-trans-retinol + NADP(+) = all-trans-retinal + NADPH + H(+). The enzyme catalyses 5alpha-androstane-3alpha,17beta-diol + NADP(+) = 17beta-hydroxy-5alpha-androstan-3-one + NADPH + H(+). Functionally, NADPH-dependent oxidoreductase which catalyzes the reduction of a variety of compounds bearing carbonyl groups including steroids, retinoids and xenobiotics. Catalyzes the reduction/inactivation of 5alpha-dihydrotestosterone to 3alpha-androstanediol, with a possible role in the modulation of androgen receptor function. Involved in the reduction of all-trans-retinal to all-trans-retinol. Converts cortisone to 20beta-dihydrocortisone in vitro, although the physiological relevance of this activity is questionable. Reduces exogenous compounds such as quinones (1,2-naphtoquinone, 9,10-phenantrenequinone and benzoquinone) and other xenobiotics (alpha-diketones) in vitro, suggesting a role in the biotransformation of xenobiotics with carbonyl group. A dehydrogenase activity has not been detected so far. May play a role as tumor suppressor. In Mus musculus (Mouse), this protein is Dehydrogenase/reductase SDR family member 7.